Reading from the N-terminus, the 384-residue chain is MGSSQKWVIGLLLFSSIFFELTAITLADDKLEESRWGNDNGCGFGRRGCGGGRFGGRGPSFGRGRGAGGGFGGGAGGGAGGGLGGGGGLGGGGGAGGGGGLGGGGGAGGGFGGGAGGGAGGGLGGGGGLGGGGGGGAGGGGGVGGGAGSGGGFGAGGGVGGGAGAGGGVGGGGGFGGGGGGGVGGGSGHGGGFGAGGGVGGGAGGGLGGGVGGGGGGGSGGGGGIGGGSGHGGGFGAGGGVGGGVGGGAAGGGGGGGGGGGGGGGGLGGGSGHGGGFGAGGGVGGGAAGGVGGGGGFGGGGGGGVGGGSGHGGGFGAGGGVGGGAGGGLGGGGGAGGGGGIGGGHGGGFGVGVGIGIGVGVGAGAGHGVGVGSGSGSGGGGNGR.

The first 27 residues, Met1 to Ala27, serve as a signal peptide directing secretion.

It localises to the secreted. It is found in the cell wall. Its function is as follows. Responsible for plasticity of the cell wall. In Petunia hybrida (Petunia), this protein is Glycine-rich cell wall structural protein 1 (GRP-1).